We begin with the raw amino-acid sequence, 1272 residues long: RING finger protein PFE0100w (1272 aa).

A disordered region spans residues 216 to 260 (INKINDVSNNDPKKDNNEKNTSSNNITHNNYNDISNNNNNNNNIN). Residues 234–260 (KNTSSNNITHNNYNDISNNNNNNNNIN) show a composition bias toward low complexity. One copy of the CHCR repeat lies at 608 to 752 (YIQTINYLET…GYKFIKYYPQ (145 aa)). Residues 771–791 (IFIPLFLDNIDFLFMFIVKFL) traverse the membrane as a helical segment. Disordered stretches follow at residues 842-862 (NQNH…NNSQ) and 908-970 (ENQT…IINK). Low complexity-rich tracts occupy residues 850-861 (SDSHNLSDDNNS) and 909-956 (NQTN…IQTN). The span at 957 to 967 (KQKGNSTTNKI) shows a compositional bias: polar residues. Residues 1146 to 1182 (MNDMNKNINDKCIEIEKDKKELEKIKKKQLKKKYNFY) adopt a coiled-coil conformation. The RING-type; atypical zinc-finger motif lies at 1189–1224 (CSICKEILSVPMIHFLCKHSYHSYCLKDNNVCILCH).

It is found in the membrane. This Plasmodium falciparum (isolate 3D7) protein is RING finger protein PFE0100w.